The chain runs to 396 residues: Na(+)/H(+) antiporter NhaA (396 aa).

The next 11 membrane-spanning stretches (helical) occupy residues 17 to 37 (FSGLLLILFCFLAIFISNTNF), 59 to 79 (FSLTNIVNDILMTFFFLEIGI), 97 to 117 (ILPGIAAIGGMIFPALIYNFI), 127 to 147 (GWAITVATDIAFAVGVLKILG), 156 to 176 (IFLLSLAIFDDIGAILIIAFF), 181 to 201 (IDQYMILLSTLVILTILSINY), 206 to 226 (CIYIYIIFGILLWESIFLSGI), 260 to 280 (SLSFLNKYFILPIFAFFNSGI), 292 to 312 (LLPFGIFFGLVLGKPIGVFLF), 333 to 353 (IAGISFLCGIGFTMSIFISNL), and 368 to 388 (FSILISSIVSSVIGFLFLYFL).

The protein belongs to the NhaA Na(+)/H(+) (TC 2.A.33) antiporter family.

The protein resides in the cell membrane. The catalysed reaction is Na(+)(in) + 2 H(+)(out) = Na(+)(out) + 2 H(+)(in). Functionally, na(+)/H(+) antiporter that extrudes sodium in exchange for external protons. This is Na(+)/H(+) antiporter NhaA from Wigglesworthia glossinidia brevipalpis.